Reading from the N-terminus, the 362-residue chain is Heme A synthase (362 aa).

Helical transmembrane passes span L10 to V30, V102 to G122, L128 to S148, V159 to L179, and A198 to L218. H262 lines the heme pocket. The next 3 helical transmembrane spans lie at A266–G286, L297–I317, and S318–A338. Residue H323 coordinates heme.

It belongs to the COX15/CtaA family. Type 2 subfamily. Interacts with CtaB. Requires heme b as cofactor.

The protein localises to the cell membrane. It carries out the reaction Fe(II)-heme o + 2 A + H2O = Fe(II)-heme a + 2 AH2. The protein operates within porphyrin-containing compound metabolism; heme A biosynthesis; heme A from heme O: step 1/1. Catalyzes the conversion of heme O to heme A by two successive hydroxylations of the methyl group at C8. The first hydroxylation forms heme I, the second hydroxylation results in an unstable dihydroxymethyl group, which spontaneously dehydrates, resulting in the formyl group of heme A. The chain is Heme A synthase from Bradyrhizobium sp. (strain BTAi1 / ATCC BAA-1182).